A 469-amino-acid polypeptide reads, in one-letter code: ATP synthase subunit beta (469 aa).

157-164 (GGAGVGKT) contacts ATP.

It belongs to the ATPase alpha/beta chains family. F-type ATPases have 2 components, CF(1) - the catalytic core - and CF(0) - the membrane proton channel. CF(1) has five subunits: alpha(3), beta(3), gamma(1), delta(1), epsilon(1). CF(0) has three main subunits: a(1), b(2) and c(9-12). The alpha and beta chains form an alternating ring which encloses part of the gamma chain. CF(1) is attached to CF(0) by a central stalk formed by the gamma and epsilon chains, while a peripheral stalk is formed by the delta and b chains.

The protein resides in the cell membrane. The catalysed reaction is ATP + H2O + 4 H(+)(in) = ADP + phosphate + 5 H(+)(out). Its function is as follows. Produces ATP from ADP in the presence of a proton gradient across the membrane. The catalytic sites are hosted primarily by the beta subunits. This Brevibacillus brevis (strain 47 / JCM 6285 / NBRC 100599) protein is ATP synthase subunit beta.